The sequence spans 117 residues: Large ribosomal subunit protein bL20 (117 aa).

Belongs to the bacterial ribosomal protein bL20 family.

Its function is as follows. Binds directly to 23S ribosomal RNA and is necessary for the in vitro assembly process of the 50S ribosomal subunit. It is not involved in the protein synthesizing functions of that subunit. This chain is Large ribosomal subunit protein bL20, found in Mannheimia succiniciproducens (strain KCTC 0769BP / MBEL55E).